We begin with the raw amino-acid sequence, 97 residues long: Protein Vpr (97 aa).

Residues 1–42 (MEQAPEDQGPQREPHNEWTLELLEELKREAVRHFPRPWLHGL) form a homooligomerization region. Residues S79, S95, and S97 each carry the phosphoserine; by host modification.

It belongs to the HIV-1 VPR protein family. Homooligomer, may form homodimer. Interacts with p6-gag region of the Pr55 Gag precursor protein through a (Leu-X-X)4 motif near the C-terminus of the P6gag protein. Interacts with host UNG. May interact with host RAD23A/HHR23A. Interacts with host VPRBP/DCAF1, leading to hijack the CUL4A-RBX1-DDB1-DCAF1/VPRBP complex, mediating ubiquitination of host proteins such as TERT and ZGPAT and arrest of the cell cycle in G2 phase. Post-translationally, phosphorylated on several residues by host. These phosphorylations regulate VPR activity for the nuclear import of the HIV-1 pre-integration complex.

It is found in the virion. The protein resides in the host nucleus. Its subcellular location is the host extracellular space. In terms of biological role, during virus replication, may deplete host UNG protein, and incude G2-M cell cycle arrest. Acts by targeting specific host proteins for degradation by the 26S proteasome, through association with the cellular CUL4A-DDB1 E3 ligase complex by direct interaction with host VPRPB/DCAF-1. Cell cycle arrest reportedly occurs within hours of infection and is not blocked by antiviral agents, suggesting that it is initiated by the VPR carried into the virion. Additionally, VPR induces apoptosis in a cell cycle dependent manner suggesting that these two effects are mechanistically linked. Detected in the serum and cerebrospinal fluid of AIDS patient, VPR may also induce cell death to bystander cells. Its function is as follows. During virus entry, plays a role in the transport of the viral pre-integration (PIC) complex to the host nucleus. This function is crucial for viral infection of non-dividing macrophages. May act directly at the nuclear pore complex, by binding nucleoporins phenylalanine-glycine (FG)-repeat regions. The polypeptide is Protein Vpr (Human immunodeficiency virus type 1 group M subtype B (isolate YU-2) (HIV-1)).